Consider the following 276-residue polypeptide: Large ribosomal subunit protein uL2 (276 aa).

2 disordered regions span residues 1–61 (MALK…HKQK) and 224–276 (AMNP…KKKN). Basic and acidic residues predominate over residues 15 to 31 (GRIDLRKDEITAQKPEK).

Belongs to the universal ribosomal protein uL2 family. In terms of assembly, part of the 50S ribosomal subunit. Forms a bridge to the 30S subunit in the 70S ribosome.

One of the primary rRNA binding proteins. Required for association of the 30S and 50S subunits to form the 70S ribosome, for tRNA binding and peptide bond formation. It has been suggested to have peptidyltransferase activity; this is somewhat controversial. Makes several contacts with the 16S rRNA in the 70S ribosome. The polypeptide is Large ribosomal subunit protein uL2 (Treponema denticola (strain ATCC 35405 / DSM 14222 / CIP 103919 / JCM 8153 / KCTC 15104)).